A 361-amino-acid chain; its full sequence is Probable cysteine protease RD19B (361 aa).

The signal sequence occupies residues 1-24 (MDYHLRVLFSVSLIFVFVSVSVCG). Positions 25-131 (DEDVLIRQVV…NQAPILPTQN (107 aa)) are cleaved as a propeptide — activation peptide. Disulfide bonds link C153-C203 and C187-C237. C156 is a catalytic residue. An N-linked (GlcNAc...) asparagine glycan is attached at N250. Cysteines 293 and 347 form a disulfide. Residues H299 and N326 contribute to the active site.

Belongs to the peptidase C1 family.

Its subcellular location is the lytic vacuole. Probable thiol protease. This is Probable cysteine protease RD19B from Arabidopsis thaliana (Mouse-ear cress).